The following is a 364-amino-acid chain: Probable G-protein coupled receptor AH9.4 (364 aa).

Met1 is a topological domain (extracellular). The helical transmembrane segment at 2 to 22 (AFLQSAYLVMVFTVPIAGVIL) threads the bilayer. The Cytoplasmic portion of the chain corresponds to 23-48 (NTYVLRKLIRVARKSVVRFETTSGLP). Residues 49–69 (LAAMSVGDSITLCALLMQAIF) traverse the membrane as a helical segment. Residues 70 to 89 (HITPKGEVPTVVLSSICKFG) are Extracellular-facing. A helical transmembrane segment spans residues 90-110 (IFLIHSTSAFSVWCWFFLSVL). Topologically, residues 111 to 130 (RYIAVFHPFKYRTIWRQPRN) are cytoplasmic. A helical membrane pass occupies residues 131–151 (ALKFLAGAVGMFQIYTLIFVT). At 152 to 177 (YRQEEKSCGEYDVFHESAFKHVHLLD) the chain is on the extracellular side. Residues 178-198 (IFLFYAIPSLLRITLDFLVLI) traverse the membrane as a helical segment. At 199–277 (HCYSPFSVEG…KKKTAMVMRS (79 aa)) the chain is on the cytoplasmic side. A helical transmembrane segment spans residues 278–298 (ILISVLNLLLNLPSHIFRAWA). The Extracellular portion of the chain corresponds to 299–315 (SYDESSLENEIVRTLEP). A helical membrane pass occupies residues 316 to 336 (IAQMMYFSQFACNAFYLATSI). The Cytoplasmic portion of the chain corresponds to 337–364 (YETNGSPRNTVISSSNRHVSRCISDDEA).

It belongs to the G-protein coupled receptor 1 family.

The protein localises to the cell membrane. Functionally, not known. Putative receptor. In Caenorhabditis elegans, this protein is Probable G-protein coupled receptor AH9.4.